Consider the following 312-residue polypeptide: MSLNVIALGGNAILDTDPTDEGQKAVVNHAAKYIAEFVAKGEQVIVCHGNGPQVGNLLLQQKAGESEKNPALKLDTCVAMTQGSIGYWLQNALTNEFEKRNIAKPVISVVTQVRVDKEDPSFKKPSKPIGPFYTKEEADAEAAKDGSTYVEDAGRGYRKVVPSPMPKEIVEKEAVRALVEADVLTICSGGGGIPVVAEDGQYVGVEAVNDKDFSARVLAENVDADRLIILTGVDNIYINYNQPDQKALEQISVAEAEEYIKEGHFAAGSMLPKIEAALDFVKGDDKRKAIITSIENLENIDKEAGTVISQKG.

It belongs to the carbamate kinase family.

The protein localises to the cytoplasm. It catalyses the reaction hydrogencarbonate + NH4(+) + ATP = carbamoyl phosphate + ADP + H2O + H(+). Its pathway is metabolic intermediate metabolism; carbamoyl phosphate degradation; CO(2) and NH(3) from carbamoyl phosphate: step 1/1. This is Carbamate kinase 2 (arcC2) from Enterococcus faecalis (strain ATCC 700802 / V583).